Reading from the N-terminus, the 142-residue chain is uncharacterized protein (142 aa).

The region spanning 1-138 (MLEKLAEAHP…SFMILVKPLA (138 aa)) is the N-acetyltransferase domain.

This is an uncharacterized protein from Bacillus subtilis (strain 168).